We begin with the raw amino-acid sequence, 138 residues long: Superoxide dismutase [Mn] (138 aa).

Residues histidine 1, histidine 49, aspartate 133, and histidine 137 each coordinate Mn(2+).

Belongs to the iron/manganese superoxide dismutase family. Requires Mn(2+) as cofactor.

The enzyme catalyses 2 superoxide + 2 H(+) = H2O2 + O2. Functionally, destroys superoxide anion radicals which are normally produced within the cells and which are toxic to biological systems. In Mycobacterium malmoense, this protein is Superoxide dismutase [Mn] (sodA).